Reading from the N-terminus, the 188-residue chain is dCTP deaminase (188 aa).

DCTP-binding positions include 111 to 116 (KSTYAR), 135 to 137 (TLE), Gln-156, Tyr-170, and Gln-180. Catalysis depends on Glu-137, which acts as the Proton donor/acceptor.

The protein belongs to the dCTP deaminase family. In terms of assembly, homotrimer.

The enzyme catalyses dCTP + H2O + H(+) = dUTP + NH4(+). It participates in pyrimidine metabolism; dUMP biosynthesis; dUMP from dCTP (dUTP route): step 1/2. Functionally, catalyzes the deamination of dCTP to dUTP. The sequence is that of dCTP deaminase from Cupriavidus pinatubonensis (strain JMP 134 / LMG 1197) (Cupriavidus necator (strain JMP 134)).